The sequence spans 361 residues: MTSAIGFEGFEKRLEISFFNPGPSVDPVARGLRSLTKNQLDKFLAPAECTIVSSLSNDLLDSYVLSESSLFVYPYKIIIKTCGTTKLLLSIPHILELSGELSLTVQSVRYTRGSFIFPGAQTFPHRSFTEEVMVLDSHFGKLGMCSNAYVMGGAEKDQKWHVYSASAESANLVTQTAPVYTLEMSMTGLSKRNASVFFKSESSSAAVMTEDSGIRKILPESQICDFDFDPCGYSMNAIEGDAISTIHVTPEDGFSYASFEAVGYDFKSMGLTVLIERVLACFEPSEFSVALHGNENVVKDLNLENNDVNVKGYNVEETKFEVLGGEGGSMVYYGFARGGSSCGSPRSTLHRCWSETENEEE.

Residues Glu8 and Glu11 contribute to the active site. The active-site Schiff-base intermediate with substrate; via pyruvic acid is Ser68. Ser68 is modified (pyruvic acid (Ser); by autocatalysis). Cys82 (proton donor; for catalytic activity) is an active-site residue. Active-site proton acceptor; for processing activity residues include Ser234 and His247. Residues 341–361 (SCGSPRSTLHRCWSETENEEE) are disordered.

It belongs to the eukaryotic AdoMetDC family. Requires pyruvate as cofactor. Is synthesized initially as an inactive proenzyme. Formation of the active enzyme involves a self-maturation process in which the active site pyruvoyl group is generated from an internal serine residue via an autocatalytic post-translational modification. Two non-identical subunits are generated from the proenzyme in this reaction, and the pyruvate is formed at the N-terminus of the alpha chain, which is derived from the carboxyl end of the proenzyme. The post-translation cleavage follows an unusual pathway, termed non-hydrolytic serinolysis, in which the side chain hydroxyl group of the serine supplies its oxygen atom to form the C-terminus of the beta chain, while the remainder of the serine residue undergoes an oxidative deamination to produce ammonia and the pyruvoyl group blocking the N-terminus of the alpha chain.

The enzyme catalyses S-adenosyl-L-methionine + H(+) = S-adenosyl 3-(methylsulfanyl)propylamine + CO2. It participates in amine and polyamine biosynthesis; S-adenosylmethioninamine biosynthesis; S-adenosylmethioninamine from S-adenosyl-L-methionine: step 1/1. The protein is S-adenosylmethionine decarboxylase proenzyme (SAMDC) of Helianthus annuus (Common sunflower).